The chain runs to 335 residues: Ketol-acid reductoisomerase (NAD(P)(+)) (335 aa).

Residues 2-182 (AKIYKDEDIS…GCARAGVIES (181 aa)) form the KARI N-terminal Rossmann domain. Residues 25-28 (YGSQ), Arg-49, Ser-53, and 83-86 (DMVQ) contribute to the NADP(+) site. Residue His-108 is part of the active site. Gly-134 serves as a coordination point for NADP(+). The 146-residue stretch at 183–328 (TFKEETETDL…RKLREMMFRG (146 aa)) folds into the KARI C-terminal knotted domain. Residues Asp-191, Glu-195, Glu-227, and Glu-231 each coordinate Mg(2+). Ser-252 contributes to the substrate binding site.

The protein belongs to the ketol-acid reductoisomerase family. As to quaternary structure, homodimer. Mg(2+) is required as a cofactor.

It carries out the reaction (2R)-2,3-dihydroxy-3-methylbutanoate + NAD(+) = (2S)-2-acetolactate + NADH + H(+). The catalysed reaction is (2R)-2,3-dihydroxy-3-methylbutanoate + NADP(+) = (2S)-2-acetolactate + NADPH + H(+). It functions in the pathway amino-acid biosynthesis; L-isoleucine biosynthesis; L-isoleucine from 2-oxobutanoate: step 2/4. Its pathway is amino-acid biosynthesis; L-valine biosynthesis; L-valine from pyruvate: step 2/4. In terms of biological role, involved in the biosynthesis of branched-chain amino acids (BCAA). Catalyzes an alkyl-migration followed by a ketol-acid reduction of (S)-2-acetolactate (S2AL) to yield (R)-2,3-dihydroxy-isovalerate. In the isomerase reaction, S2AL is rearranged via a Mg-dependent methyl migration to produce 3-hydroxy-3-methyl-2-ketobutyrate (HMKB). In the reductase reaction, this 2-ketoacid undergoes a metal-dependent reduction by NADPH or NADH to yield (R)-2,3-dihydroxy-isovalerate. This is Ketol-acid reductoisomerase (NAD(P)(+)) from Ignisphaera aggregans (strain DSM 17230 / JCM 13409 / AQ1.S1).